A 347-amino-acid chain; its full sequence is MSDLGAVVALLLWGQLFAVDSGNDVTDIADDGCPKPPMIANGYVEHLVRYQCKNYYRLRTEGDGVYTLNNEKQWTNKAVGDKLPECEAVCGKPKNPADAVQRILGGHLDAKGSFPWQAKMVSRHNLTTGATLINEQWLLTTAKNLFLNHSENATAKDIAPTLTLYVGKKQLVEIEKVVLYPNYSQIDIGLIKLKQKVPVNERVMPICLPSKDYAEVGRVGYVSGWGRNANFNFTDHLKYVMLPVADQYDCIKHYEGSTVPEKKTPKSPVGEQPILNEHTFCAGMSKYQEDTCYGDAGSAFAVHDLEKDTWYAAGILSFDKSCGVAEYGVYVKATSIQDWVQKTIAEN.

Positions 1-18 (MSDLGAVVALLLWGQLFA) are cleaved as a signal peptide. Residues 31 to 88 (DGCPKPPMIANGYVEHLVRYQCKNYYRLRTEGDGVYTLNNEKQWTNKAVGDKLPECEA) enclose the Sushi domain. 2 cysteine pairs are disulfide-bonded: Cys52/Cys86 and Cys90/Cys207. Residues 103-347 (ILGGHLDAKG…DWVQKTIAEN (245 aa)) are serine protease. N-linked (GlcNAc...) asparagine glycosylation is found at Asn125, Asn148, Asn152, Asn182, and Asn232. Cystine bridges form between Cys250–Cys281 and Cys292–Cys322. The segment at 259–264 (VPEKKT) is interaction with CD163.

Belongs to the peptidase S1 family. Tetramer of two alpha and two beta chains; disulfide-linked. The hemoglobin/haptoglobin complex is composed of a haptoglobin dimer bound to two hemoglobin alpha-beta dimers. Interacts with CD163. Interacts with ERGIC3. Expressed by the liver and secreted in plasma.

It is found in the secreted. As a result of hemolysis, hemoglobin is found to accumulate in the kidney and is secreted in the urine. Haptoglobin captures, and combines with free plasma hemoglobin to allow hepatic recycling of heme iron and to prevent kidney damage. Haptoglobin also acts as an antioxidant, has antibacterial activity and plays a role in modulating many aspects of the acute phase response. Hemoglobin/haptoglobin complexes are rapidly cleared by the macrophage CD163 scavenger receptor expressed on the surface of liver Kupfer cells through an endocytic lysosomal degradation pathway. The polypeptide is Haptoglobin (HP) (Papio hamadryas (Hamadryas baboon)).